The primary structure comprises 584 residues: Arginine--tRNA ligase (584 aa).

The 'HIGH' region signature appears at 129–139 (ANPTGPLHVGH).

Belongs to the class-I aminoacyl-tRNA synthetase family. As to quaternary structure, monomer.

Its subcellular location is the cytoplasm. The enzyme catalyses tRNA(Arg) + L-arginine + ATP = L-arginyl-tRNA(Arg) + AMP + diphosphate. The polypeptide is Arginine--tRNA ligase (Halorhodospira halophila (strain DSM 244 / SL1) (Ectothiorhodospira halophila (strain DSM 244 / SL1))).